The sequence spans 598 residues: Aspartate--tRNA(Asp/Asn) ligase (598 aa).

Glutamate 175 contributes to the L-aspartate binding site. Residues 199 to 202 (QQFK) form an aspartate region. L-aspartate contacts are provided by arginine 221 and histidine 452. 221–223 (RDE) provides a ligand contact to ATP. Residue glutamate 486 coordinates ATP. Arginine 493 contacts L-aspartate. Residue 538–541 (GVDR) participates in ATP binding.

It belongs to the class-II aminoacyl-tRNA synthetase family. Type 1 subfamily. Homodimer.

It is found in the cytoplasm. The enzyme catalyses tRNA(Asx) + L-aspartate + ATP = L-aspartyl-tRNA(Asx) + AMP + diphosphate. In terms of biological role, aspartyl-tRNA synthetase with relaxed tRNA specificity since it is able to aspartylate not only its cognate tRNA(Asp) but also tRNA(Asn). Reaction proceeds in two steps: L-aspartate is first activated by ATP to form Asp-AMP and then transferred to the acceptor end of tRNA(Asp/Asn). The sequence is that of Aspartate--tRNA(Asp/Asn) ligase from Gluconobacter oxydans (strain 621H) (Gluconobacter suboxydans).